Reading from the N-terminus, the 284-residue chain is Nucleotide-binding protein Teth39_0666 (284 aa).

An ATP-binding site is contributed by 8–15 (GLSGAGKT). Position 58 to 61 (58 to 61 (DLRG)) interacts with GTP.

This sequence belongs to the RapZ-like family.

Displays ATPase and GTPase activities. This Thermoanaerobacter pseudethanolicus (strain ATCC 33223 / 39E) (Clostridium thermohydrosulfuricum) protein is Nucleotide-binding protein Teth39_0666.